Here is a 539-residue protein sequence, read N- to C-terminus: Effector protein hopAB1 (539 aa).

4 disordered regions span residues 1-93 (MPGI…PEAQ), 163-220 (QTVR…RHPQ), 230-249 (ASAA…LRRL), and 315-336 (RQTT…SGRR). Residues 18 to 31 (TDGEPVTEREHDSS) show a composition bias toward basic and acidic residues. The span at 181-194 (SSSGSSQRSLIGRS) shows a compositional bias: low complexity.

It belongs to the HopAB family.

It localises to the secreted. In terms of biological role, effector protein that plays different roles depending on the species and plant cultivars that interact with the pathogen. Acts as a virulence determinant by enhancing the development of disease symptoms and bacterial growth. Acts as an avirulence factor by eliciting hypersensitive response (HR) and plant resistance. The protein is Effector protein hopAB1 (hopAB1) of Pseudomonas savastanoi pv. phaseolicola (strain 1448A / Race 6) (Pseudomonas syringae pv. phaseolicola (strain 1448A / Race 6)).